We begin with the raw amino-acid sequence, 301 residues long: Mitochondrial thiamine pyrophosphate carrier 1 (301 aa).

3 Solcar repeats span residues 15-102, 115-200, and 206-293; these read VTPT…ISKS, SSAN…AREL, and RVPF…SLSF. 6 helical membrane passes run 20-38, 79-99, 121-141, 172-192, 207-227, and 252-272; these read ALVAGSIAGAISRAFTAPL, VPAEILYILYGGVQFGSYSII, LIVGIGSGIVSTLVTYPFDLL, IYAGIRPAMLSVSSTTGLMFW, VPFIEAICGFIAGATSKGITF, and IFVTILKNEGVFGLYKGFGIS.

Belongs to the mitochondrial carrier (TC 2.A.29) family.

The protein resides in the mitochondrion inner membrane. Its function is as follows. Mitochondrial transporter that mediates uptake of thiamine pyrophosphate (ThPP) into mitochondria. This chain is Mitochondrial thiamine pyrophosphate carrier 1 (TPC1), found in Candida albicans (strain SC5314 / ATCC MYA-2876) (Yeast).